Here is an 854-residue protein sequence, read N- to C-terminus: Protein SEY1 homolog (854 aa).

Residues 1-724 (MAAFSGETAV…LRNIESGKQS (724 aa)) are Cytoplasmic-facing. One can recognise a GB1/RHD3-type G domain in the interval 49 to 291 (GVNYHVVGVF…NSNFLFSNCS (243 aa)). 59–66 (GGQSSGKS) provides a ligand contact to GTP. Positions 336–386 (KHAAIEEFKEVCEEYTKKIQRGDVIPQFTRALEETIERLLKNFSDQTKLYK) form a coiled coil. The chain crosses the membrane as a helical span at residues 725–745 (LPPWVLPVMLLLGWNELYYLL). At 746–748 (TSP) the chain is on the lumenal side. The chain crosses the membrane as a helical span at residues 749 to 769 (ILLIAIIVIAVLFFKTFLKSQ). Over 770-854 (LEVLEEKCPV…CRESRDKGED (85 aa)) the chain is Cytoplasmic. The segment at 808-854 (GGGGAQFRDPTQATSVSGASAGVSSESSSAASPRRRVCRESRDKGED) is disordered. Low complexity predominate over residues 822 to 839 (SVSGASAGVSSESSSAAS). A compositionally biased stretch (basic and acidic residues) spans 845-854 (CRESRDKGED).

It belongs to the TRAFAC class dynamin-like GTPase superfamily. GB1/RHD3 GTPase family. RHD3 subfamily.

It is found in the endoplasmic reticulum membrane. Functionally, probable GTP-binding protein that may be involved in cell development. This Trypanosoma brucei brucei (strain 927/4 GUTat10.1) protein is Protein SEY1 homolog.